We begin with the raw amino-acid sequence, 600 residues long: Brain-enriched guanylate kinase-associated protein (600 aa).

An N-acetylmethionine modification is found at M1. Y137 carries the post-translational modification Phosphotyrosine. The segment at 192–222 is disordered; it reads PGSLSSRMSDASARDLGYRDGVEKSGPRPPY. Position 200 is a phosphoserine (S200). Over residues 203 to 217 the composition is skewed to basic and acidic residues; that stretch reads SARDLGYRDGVEKSG. Phosphoserine occurs at positions 229 and 246. At T249 the chain carries Phosphothreonine. At S265 the chain carries Phosphoserine. A disordered region spans residues 298–317; that stretch reads SSYSSFSATSEEKEHAQAGT. Position 372 is a phosphoserine (S372). R380 is subject to Asymmetric dimethylarginine. 7 positions are modified to phosphoserine: S463, S473, S483, S485, S508, S510, and S514. Residues 537-590 form a disordered region; it reads GAGSSPEPEHGSRESLEPSSMEASPEMHPPTRLSPQQAFPRTGGSGLSRKDSLT. A compositionally biased stretch (basic and acidic residues) spans 543–552; that stretch reads EPEHGSRESL. 2 positions are modified to phosphoserine: S560 and S570.

Interacts with DLG4 and DLGAP1 and forms a ternary complex.

The protein localises to the cytoplasm. Its subcellular location is the membrane. May sustain the structure of the postsynaptic density (PSD). The sequence is that of Brain-enriched guanylate kinase-associated protein (Begain) from Mus musculus (Mouse).